A 628-amino-acid polypeptide reads, in one-letter code: tRNA (guanine(37)-N(1))-methyltransferase (628 aa).

Residues His-265, 303 to 304, 342 to 343, and Asn-445 each bind S-adenosyl-L-methionine; these read DL and DG.

This sequence belongs to the class I-like SAM-binding methyltransferase superfamily. TRM5/TYW2 family. As to quaternary structure, monomer.

It localises to the mitochondrion matrix. It is found in the nucleus. The protein localises to the cytoplasm. It catalyses the reaction guanosine(37) in tRNA + S-adenosyl-L-methionine = N(1)-methylguanosine(37) in tRNA + S-adenosyl-L-homocysteine + H(+). Specifically methylates the N1 position of guanosine-37 in various cytoplasmic and mitochondrial tRNAs. Methylation is not dependent on the nature of the nucleoside 5' of the target nucleoside. This is the first step in the biosynthesis of wybutosine (yW), a modified base adjacent to the anticodon of tRNAs and required for accurate decoding. In Mycosarcoma maydis (Corn smut fungus), this protein is tRNA (guanine(37)-N(1))-methyltransferase.